A 363-amino-acid chain; its full sequence is Chorismate synthase (363 aa).

R48 is an NADP(+) binding site. FMN is bound by residues R125–S127, N238–A239, G278, K293–S297, and R319.

This sequence belongs to the chorismate synthase family. As to quaternary structure, homotetramer. Requires FMNH2 as cofactor.

The catalysed reaction is 5-O-(1-carboxyvinyl)-3-phosphoshikimate = chorismate + phosphate. It functions in the pathway metabolic intermediate biosynthesis; chorismate biosynthesis; chorismate from D-erythrose 4-phosphate and phosphoenolpyruvate: step 7/7. In terms of biological role, catalyzes the anti-1,4-elimination of the C-3 phosphate and the C-6 proR hydrogen from 5-enolpyruvylshikimate-3-phosphate (EPSP) to yield chorismate, which is the branch point compound that serves as the starting substrate for the three terminal pathways of aromatic amino acid biosynthesis. This reaction introduces a second double bond into the aromatic ring system. This is Chorismate synthase from Acinetobacter baumannii (strain SDF).